Here is a 242-residue protein sequence, read N- to C-terminus: 7-cyano-7-deazaguanine synthase (242 aa).

13–23 (FSGGQDSSVCL) is an ATP binding site. Zn(2+)-binding residues include Cys-201, Cys-216, Cys-219, and Cys-222.

It belongs to the QueC family. Zn(2+) is required as a cofactor.

It catalyses the reaction 7-carboxy-7-deazaguanine + NH4(+) + ATP = 7-cyano-7-deazaguanine + ADP + phosphate + H2O + H(+). Its pathway is purine metabolism; 7-cyano-7-deazaguanine biosynthesis. In terms of biological role, catalyzes the ATP-dependent conversion of 7-carboxy-7-deazaguanine (CDG) to 7-cyano-7-deazaguanine (preQ(0)). The sequence is that of 7-cyano-7-deazaguanine synthase from Caulobacter vibrioides (strain ATCC 19089 / CIP 103742 / CB 15) (Caulobacter crescentus).